Reading from the N-terminus, the 153-residue chain is Salivary C-type lectin 1 (153 aa).

A signal peptide spans 1 to 19 (MIFSLYLIVAISLADLTAA). The 126-residue stretch at 26–151 (KNRFCFPNVV…CSSTRRFVCE (126 aa)) folds into the C-type lectin domain. Cystine bridges form between Cys45–Cys150 and Cys122–Cys142.

It depends on Ca(2+) as a cofactor. In terms of tissue distribution, expressed in female salivary gland. Not detected or low-level expression in female midgut and fat body.

The protein resides in the secreted. Salivary protein with carbohydrate-binding activity; exibits high affinity for D-mannose. Agglutinates host erythrocytes. Probably participates in mosquito innate immune responses to prevent microorganism multiplication in sugar and blood meals. In terms of biological role, (Microbial infection) Agglutinates Staphylococcus aureus in vitro. Functionally, (Microbial infection) Agglutinates Candida albicans in vitro. Its function is as follows. (Microbial infection) Does not agglutinate Escherichia coli in vitro. This chain is Salivary C-type lectin 1, found in Aedes albopictus (Asian tiger mosquito).